A 689-amino-acid polypeptide reads, in one-letter code: Glycine--tRNA ligase beta subunit (689 aa).

This sequence belongs to the class-II aminoacyl-tRNA synthetase family. In terms of assembly, tetramer of two alpha and two beta subunits.

The protein resides in the cytoplasm. It carries out the reaction tRNA(Gly) + glycine + ATP = glycyl-tRNA(Gly) + AMP + diphosphate. The chain is Glycine--tRNA ligase beta subunit from Pectobacterium carotovorum subsp. carotovorum (strain PC1).